The following is a 414-amino-acid chain: Serine hydroxymethyltransferase (414 aa).

(6S)-5,6,7,8-tetrahydrofolate contacts are provided by residues Leu-116 and Gly-120–Leu-122. An N6-(pyridoxal phosphate)lysine modification is found at Lys-224. Residues Glu-240 and Ser-348 to Phe-350 contribute to the (6S)-5,6,7,8-tetrahydrofolate site.

It belongs to the SHMT family. As to quaternary structure, homodimer. Pyridoxal 5'-phosphate serves as cofactor.

Its subcellular location is the cytoplasm. The catalysed reaction is (6R)-5,10-methylene-5,6,7,8-tetrahydrofolate + glycine + H2O = (6S)-5,6,7,8-tetrahydrofolate + L-serine. Its pathway is one-carbon metabolism; tetrahydrofolate interconversion. The protein operates within amino-acid biosynthesis; glycine biosynthesis; glycine from L-serine: step 1/1. In terms of biological role, catalyzes the reversible interconversion of serine and glycine with tetrahydrofolate (THF) serving as the one-carbon carrier. This reaction serves as the major source of one-carbon groups required for the biosynthesis of purines, thymidylate, methionine, and other important biomolecules. Also exhibits THF-independent aldolase activity toward beta-hydroxyamino acids, producing glycine and aldehydes, via a retro-aldol mechanism. In Campylobacter jejuni subsp. jejuni serotype O:23/36 (strain 81-176), this protein is Serine hydroxymethyltransferase.